Reading from the N-terminus, the 203-residue chain is Large ribosomal subunit protein bL25 (203 aa).

Belongs to the bacterial ribosomal protein bL25 family. CTC subfamily. In terms of assembly, part of the 50S ribosomal subunit; part of the 5S rRNA/L5/L18/L25 subcomplex. Contacts the 5S rRNA. Binds to the 5S rRNA independently of L5 and L18.

Functionally, this is one of the proteins that binds to the 5S RNA in the ribosome where it forms part of the central protuberance. This chain is Large ribosomal subunit protein bL25, found in Rickettsia typhi (strain ATCC VR-144 / Wilmington).